A 203-amino-acid polypeptide reads, in one-letter code: 22.3 kDa class VI heat shock protein (203 aa).

The sHSP domain maps to 86–203; it reads ALRRGARTTV…DAHQAAAATA (118 aa).

This sequence belongs to the small heat shock protein (HSP20) family. In terms of assembly, may form oligomeric structures.

Its subcellular location is the cytoplasm. This is 22.3 kDa class VI heat shock protein (HSP22.3) from Oryza sativa subsp. japonica (Rice).